Here is a 320-residue protein sequence, read N- to C-terminus: Ferrochelatase (320 aa).

His-194 and Glu-275 together coordinate Fe cation.

The protein belongs to the ferrochelatase family. As to quaternary structure, monomer.

Its subcellular location is the cytoplasm. The enzyme catalyses heme b + 2 H(+) = protoporphyrin IX + Fe(2+). It participates in porphyrin-containing compound metabolism; protoheme biosynthesis; protoheme from protoporphyrin-IX: step 1/1. Catalyzes the ferrous insertion into protoporphyrin IX. This Escherichia coli O9:H4 (strain HS) protein is Ferrochelatase.